Here is a 56-residue protein sequence, read N- to C-terminus: Small ribosomal subunit protein bS21 (56 aa).

This sequence belongs to the bacterial ribosomal protein bS21 family.

This is Small ribosomal subunit protein bS21 (rpsU) from Geobacillus stearothermophilus (Bacillus stearothermophilus).